The following is a 78-amino-acid chain: MWPNSILVLTVLLISSTLVTGGGVKGAEKGVCPPDNVRCIRGEDPQCHNDNDCKDQKICCYWHCGFKCVQPVKDSWEQ.

Positions 1-21 (MWPNSILVLTVLLISSTLVTG) are cleaved as a signal peptide. The WAP domain maps to 25–72 (KGAEKGVCPPDNVRCIRGEDPQCHNDNDCKDQKICCYWHCGFKCVQPV). Intrachain disulfides connect Cys32-Cys60, Cys39-Cys64, Cys47-Cys59, and Cys53-Cys68.

Its subcellular location is the secreted. Antibacterial protein. Putative acid-stable proteinase inhibitor. This chain is WAP four-disulfide core domain protein 12, found in Rattus norvegicus (Rat).